Here is a 764-residue protein sequence, read N- to C-terminus: Hemocyte protein-glutamine gamma-glutamyltransferase (764 aa).

Active-site residues include C343, H402, and D425. Residues N465, D467, E522, and E527 each coordinate Ca(2+).

Belongs to the transglutaminase superfamily. Transglutaminase family. Ca(2+) is required as a cofactor. As to expression, mainly expressed in hemocytes, hepatopancreas, and gastric tissues. On the other hand nothing was detected in the heart, intestine and muscle.

The protein resides in the membrane. It catalyses the reaction L-glutaminyl-[protein] + L-lysyl-[protein] = [protein]-L-lysyl-N(6)-5-L-glutamyl-[protein] + NH4(+). Catalyzes the cross-linking of proteins and the conjugation of polyamines to proteins. The sequence is that of Hemocyte protein-glutamine gamma-glutamyltransferase from Tachypleus tridentatus (Japanese horseshoe crab).